The following is a 247-amino-acid chain: (7aS)-7a-methyl-1,5-dioxo-2,3,5,6,7,7a-hexahydro-1H-indene-carboxyl-CoA hydrolase (247 aa).

It belongs to the enoyl-CoA hydratase/isomerase family.

The enzyme catalyses (7aS)-7a-methyl-1,5-dioxo-2,3,5,6,7,7a-hexahydro-1H-indene-carboxyl-CoA + H2O = (3E)-2-(2-carboxylatoethyl)-3-methyl-6-oxocyclohex-1-ene-1-carboxyl-CoA + H(+). It participates in steroid metabolism; cholesterol degradation. Its function is as follows. Involved in the final steps of cholesterol and steroid degradation. Catalyzes the hydrolytic ring D opening of (7aS)-7a-methyl-1,5-dioxo-2,3,5,6,7,7a-hexahydro-1H-indene-carboxyl-CoA (HIEC-CoA) to (3E)-2-(2-carboxylatoethyl)-3-methyl-6-oxocyclohex-1-ene-1-carboxyl-CoA (COCHEA-CoA). The protein is (7aS)-7a-methyl-1,5-dioxo-2,3,5,6,7,7a-hexahydro-1H-indene-carboxyl-CoA hydrolase of Mycobacterium tuberculosis (strain ATCC 25618 / H37Rv).